Here is a 180-residue protein sequence, read N- to C-terminus: Ribulose bisphosphate carboxylase small subunit 1A, chloroplastic (180 aa).

A chloroplast-targeting transit peptide spans 1-54; sequence MASSMLSSATMVASPAQATMVAPFNGLKSSAAFPATRKANNDITSITSNGGRVN. Ser113 carries the phosphoserine modification.

It belongs to the RuBisCO small chain family. As to quaternary structure, heterohexadecamer of 8 large and 8 small subunits.

It is found in the plastid. The protein resides in the chloroplast membrane. It localises to the chloroplast stroma. RuBisCO catalyzes two reactions: the carboxylation of D-ribulose 1,5-bisphosphate, the primary event in carbon dioxide fixation, as well as the oxidative fragmentation of the pentose substrate. Both reactions occur simultaneously and in competition at the same active site. Although the small subunit is not catalytic it is essential for maximal activity. The sequence is that of Ribulose bisphosphate carboxylase small subunit 1A, chloroplastic (RBCS-1A) from Arabidopsis thaliana (Mouse-ear cress).